The sequence spans 302 residues: MTNLNASQANHRNFILTGIPGTPDKNPWLAFPLGFLYTLTLLGNGTILAVIKVEPSLHEPTYYFLSILALTDVSLSMSTLPSMLSIYWFNAPQIVFDACIMQMFFIHVFGIVESGVLVSMAFDRFVAIRNPLHYVSILTHDVIRKTGIAVLTRAVCVVFPVPFLIKCLPFCHSNVLSHSYCLHQNMMRLACASTRINSLYGLIVVIFTLGLDVLLTLLSYVLTLKTVLGIVSRGERLKTLSTCLSHMSTVLLFYVPFMGAASMIHRFWEHLSPVVHMVMADIYLLLPPVLNPIVYSVKTKQI.

The Extracellular portion of the chain corresponds to 1-27 (MTNLNASQANHRNFILTGIPGTPDKNP). The N-linked (GlcNAc...) asparagine glycan is linked to asparagine 5. The helical transmembrane segment at 28–48 (WLAFPLGFLYTLTLLGNGTIL) threads the bilayer. The Cytoplasmic portion of the chain corresponds to 49–56 (AVIKVEPS). A helical membrane pass occupies residues 57-77 (LHEPTYYFLSILALTDVSLSM). Over 78 to 101 (STLPSMLSIYWFNAPQIVFDACIM) the chain is Extracellular. The cysteines at positions 99 and 191 are disulfide-linked. The helical transmembrane segment at 102-122 (QMFFIHVFGIVESGVLVSMAF) threads the bilayer. Residues 123–141 (DRFVAIRNPLHYVSILTHD) are Cytoplasmic-facing. The chain crosses the membrane as a helical span at residues 142 to 162 (VIRKTGIAVLTRAVCVVFPVP). Residues 163-198 (FLIKCLPFCHSNVLSHSYCLHQNMMRLACASTRINS) lie on the Extracellular side of the membrane. Residues 199-219 (LYGLIVVIFTLGLDVLLTLLS) traverse the membrane as a helical segment. The Cytoplasmic portion of the chain corresponds to 220–239 (YVLTLKTVLGIVSRGERLKT). Residues 240–260 (LSTCLSHMSTVLLFYVPFMGA) traverse the membrane as a helical segment. Over 261–276 (ASMIHRFWEHLSPVVH) the chain is Extracellular. Residues 277 to 297 (MVMADIYLLLPPVLNPIVYSV) traverse the membrane as a helical segment. The Cytoplasmic portion of the chain corresponds to 298-302 (KTKQI).

This sequence belongs to the G-protein coupled receptor 1 family.

The protein localises to the cell membrane. In terms of biological role, odorant receptor. The polypeptide is Olfactory receptor 51H1 (OR51H1) (Homo sapiens (Human)).